Consider the following 691-residue polypeptide: WD repeat-containing protein 48 homolog (691 aa).

WD repeat units follow at residues 27 to 82 (LHRS…PVQY), 88 to 130 (RHTD…YLDS), 133 to 168 (LHTD…NSNF), 180 to 219 (GCKN…KPMK), 222 to 261 (GHSD…NIAT), 264 to 303 (AHEE…KFQV), 306 to 347 (KEEA…QNSN), and 399 to 438 (SGAP…KVKE).

The protein belongs to the WD repeat WDR48 family. Interacts with usp-46; the interaction increases the catalytic activity of usp-46 in the presence of wdr-20.

Functionally, together with wdr-20, binds to and stimulates the activity of the deubiquitinating enzyme usp-46, leading to deubiquitination and stabilization of the glr-1 glutamate receptor. The sequence is that of WD repeat-containing protein 48 homolog (wdr-48) from Caenorhabditis briggsae.